We begin with the raw amino-acid sequence, 274 residues long: PTS system sorbose-specific EIID component (274 aa).

The PTS EIID domain maps to 4–273; it reads KKITQGDLVS…GIIGNALGFL (270 aa). Transmembrane regions (helical) follow at residues 61-81, 99-119, 126-146, 186-206, 226-246, and 253-273; these read LVFF…TAAM, IKVG…WGTL, LGAS…FFIF, ILGL…NVPL, ILDQ…MVRL, and PVWL…LGFL.

The protein localises to the cell inner membrane. Functionally, the phosphoenolpyruvate-dependent sugar phosphotransferase system (PTS), a major carbohydrate active transport system, catalyzes the phosphorylation of incoming sugar substrates concomitant with their translocation across the cell membrane. The enzyme II SorABFM PTS system is involved in sorbose transport. The protein is PTS system sorbose-specific EIID component of Klebsiella pneumoniae.